The primary structure comprises 335 residues: tRNA N6-adenosine threonylcarbamoyltransferase (335 aa).

The Fe cation site is built by His112 and His116. Residues 134–138 (VVSGG), Asp167, Gly180, and Asn273 each bind substrate. Asp301 is a binding site for Fe cation.

Belongs to the KAE1 / TsaD family. Fe(2+) is required as a cofactor.

It is found in the cytoplasm. It carries out the reaction L-threonylcarbamoyladenylate + adenosine(37) in tRNA = N(6)-L-threonylcarbamoyladenosine(37) in tRNA + AMP + H(+). In terms of biological role, required for the formation of a threonylcarbamoyl group on adenosine at position 37 (t(6)A37) in tRNAs that read codons beginning with adenine. Is involved in the transfer of the threonylcarbamoyl moiety of threonylcarbamoyl-AMP (TC-AMP) to the N6 group of A37, together with TsaE and TsaB. TsaD likely plays a direct catalytic role in this reaction. In Shouchella clausii (strain KSM-K16) (Alkalihalobacillus clausii), this protein is tRNA N6-adenosine threonylcarbamoyltransferase.